A 34-amino-acid polypeptide reads, in one-letter code: GCASRCKAKCAGRRCKGWASASFRGRCYCKCFRC.

Disulfide bonds link C2–C27, C6–C29, C10–C31, and C15–C34.

The protein localises to the secreted. Functionally, has antibacterial activity against A.viridans, B.megaterium, M.luteus, E.faecalis, S.aureus and E.coli. It is active against the marine species A.carrageenovora, P.alginovora and C.drobachiensis. This chain is Mytilin-A, found in Mytilus edulis (Blue mussel).